Consider the following 199-residue polypeptide: MAP6 domain-containing protein 1 (199 aa).

Residues cysteine 5, cysteine 10, and cysteine 11 are each lipidated (S-palmitoyl cysteine). The disordered stretch occupies residues 33-110; sequence YSDLDSEEPG…SAQSSAPPAP (78 aa). Serine 38 is subject to Phosphoserine. Mn regions lie at residues 130–143 and 165–177; these read TTSY…WTGV and DSSP…VPEV. Residue serine 167 is modified to Phosphoserine.

Belongs to the STOP family. In terms of assembly, interacts with calmodulin. Palmitoylated. Palmitoylation enhances association with microtubules.

The protein resides in the golgi apparatus. Its subcellular location is the cytoplasm. It localises to the cytoskeleton. Its function is as follows. May have microtubule-stabilizing activity. The polypeptide is MAP6 domain-containing protein 1 (MAP6D1) (Homo sapiens (Human)).